The following is a 66-amino-acid chain: Sec-independent protein translocase protein TatA (66 aa).

Residues 1-21 form a helical membrane-spanning segment; sequence MIGGLGMPELIIILVIILIIF. The disordered stretch occupies residues 45–66; the sequence is RDAELNEGDKDDKEKEQEKLDK.

It belongs to the TatA/E family. The Tat system comprises two distinct complexes: a TatABC complex, containing multiple copies of TatA, TatB and TatC subunits, and a separate TatA complex, containing only TatA subunits. Substrates initially bind to the TatABC complex, which probably triggers association of the separate TatA complex to form the active translocon.

The protein localises to the cell inner membrane. In terms of biological role, part of the twin-arginine translocation (Tat) system that transports large folded proteins containing a characteristic twin-arginine motif in their signal peptide across membranes. TatA could form the protein-conducting channel of the Tat system. This is Sec-independent protein translocase protein TatA from Desulforapulum autotrophicum (strain ATCC 43914 / DSM 3382 / VKM B-1955 / HRM2) (Desulfobacterium autotrophicum).